Reading from the N-terminus, the 137-residue chain is NADH-quinone oxidoreductase subunit A (137 aa).

3 consecutive transmembrane segments (helical) span residues 12-32 (WAFA…LGVS), 68-88 (LVAM…AWAV), and 94-114 (GWVG…GLVY).

This sequence belongs to the complex I subunit 3 family. In terms of assembly, NDH-1 is composed of 13 different subunits. Subunits NuoA, H, J, K, L, M, N constitute the membrane sector of the complex.

Its subcellular location is the cell inner membrane. The enzyme catalyses a quinone + NADH + 5 H(+)(in) = a quinol + NAD(+) + 4 H(+)(out). In terms of biological role, NDH-1 shuttles electrons from NADH, via FMN and iron-sulfur (Fe-S) centers, to quinones in the respiratory chain. The immediate electron acceptor for the enzyme in this species is believed to be ubiquinone. Couples the redox reaction to proton translocation (for every two electrons transferred, four hydrogen ions are translocated across the cytoplasmic membrane), and thus conserves the redox energy in a proton gradient. The chain is NADH-quinone oxidoreductase subunit A from Ectopseudomonas mendocina (strain ymp) (Pseudomonas mendocina).